The chain runs to 424 residues: MSYIIDRRLNSKKKSTVNRQRFLRRYKQHIKKAVSDAIDKRSIQDMDRGEKIGIPSKDISEPVFHHDSGGVDTRVLPGNDQFHSGDRIQRPPSGQGGGGSGKGASDSGEGMDEFVFQITQEEFLNFMFEDLALPNLVKRQLAGIEEFEMRRAGFSNEGSPGKINVVRSLRSANSRRIALTSKKRKQLKELEARIAQLQAEPIADSATELEELEAEAAKLRAKIKRVPWLDTFDLKYNLHVKHPIPHSRAVMFCLMDVSGSMDQATKDVAKRFFLLLFLFLQRNYEKIEVVFIRHHTSAKEVNEEEFFYSRETGGTIVSSALHLMDEIIRERYPPNQWNIYGAQASDGDNWNDDSTTCYKVLTENIMPKVQYFSYIEITPRDHQALWAAYESVLRDFPKSFAMRQLEGADEIYPVFRDLFQKQVA.

The tract at residues 52–109 (IGIPSKDISEPVFHHDSGGVDTRVLPGNDQFHSGDRIQRPPSGQGGGGSGKGASDSGE) is disordered. A compositionally biased stretch (basic and acidic residues) spans 58–69 (DISEPVFHHDSG).

It belongs to the UPF0229 family.

This Saccharophagus degradans (strain 2-40 / ATCC 43961 / DSM 17024) protein is UPF0229 protein Sde_0732.